Consider the following 215-residue polypeptide: 16S rRNA (adenine(1408)-N(1))-methyltransferase (215 aa).

S-adenosyl-L-methionine-binding positions include glycine 32, aspartate 55, 87–88 (AE), 102–107 (LMPWGS), and 191–193 (TSW).

It belongs to the methyltransferase superfamily. Kanamycin-apramycin resistance family.

The enzyme catalyses adenosine(1408) in 16S rRNA + S-adenosyl-L-methionine = N(1)-methyladenosine(1408) in 16S rRNA + S-adenosyl-L-homocysteine + H(+). Functionally, specifically methylates the N(1) position of adenine 1408 in 16S rRNA. Confers resistance to various aminoglycosides, including kanamycin, neomycin and apramycin. The chain is 16S rRNA (adenine(1408)-N(1))-methyltransferase (kamB) from Streptoalloteichus tenebrarius (strain ATCC 17920 / DSM 40477 / JCM 4838 / CBS 697.72 / NBRC 16177 / NCIMB 11028 / NRRL B-12390 / A12253. 1 / ISP 5477) (Streptomyces tenebrarius).